The following is a 515-amino-acid chain: MGLHFKWPLGAPMLAAIYAMSVVLKMLPALGMACPPKCRCEKLLFYCDSQGFHSVPNATDKGSLGLSLRHNHITALERDQFASFSQLTWLHLDHNQISTVKEDAFQGLYKLKELILSSNKIFYLPNTTFTQLINLQNLDLSFNQLSSLHPELFYGLRKLQTLHLRSNSLRTIPVRLFWDCRSLEFLDLSTNRLRSLARNGFAGLIKLRELHLEHNQLTKINFAHFLRLSSLHTLFLQWNKISNLTCGMDWTWSTLEKLDLTGNEIKAIDLTVFETMPNLKILLMDNNKLNSLDSKILNSLKSLTTVGLSGNLWECSPRVCALASWLGSFQGRWEHSILCHSPDHTQGEDILDAVHGFQLCWNLSTTVTAMATTYRDPTTEYTKISSSSYHVGDKEIPTTAGIAVTTEEHFPEPDNAIFTQRVITGTMALLFSFFFIIFIVFISRKCCPPTLRRIRQCSMIQNHRQLRSQTRLHMSNMSDQGPYNEYEPTHEGPFIIINGYGQCKCQQLPYKECEV.

Positions 1–33 are cleaved as a signal peptide; that stretch reads MGLHFKWPLGAPMLAAIYAMSVVLKMLPALGMA. The LRRNT domain maps to 34 to 61; sequence CPPKCRCEKLLFYCDSQGFHSVPNATDK. The Extracellular portion of the chain corresponds to 34–421; sequence CPPKCRCEKL…EPDNAIFTQR (388 aa). Asn-57 carries N-linked (GlcNAc...) asparagine glycosylation. 10 LRR repeats span residues 63-83, 86-107, 110-131, 134-155, 158-179, 182-203, 206-227, 230-251, 254-275, and 278-299; these read SLGLSLRHNHITALERDQFAS, QLTWLHLDHNQISTVKEDAFQG, KLKELILSSNKIFYLPNTTFTQ, NLQNLDLSFNQLSSLHPELFYG, KLQTLHLRSNSLRTIPVRLFWD, SLEFLDLSTNRLRSLARNGFAG, KLRELHLEHNQLTKINFAHFLR, SLHTLFLQWNKISNLTCGMDWT, TLEKLDLTGNEIKAIDLTVFET, and NLKILLMDNNKLNSLDSKILNS. The N-linked (GlcNAc...) asparagine glycan is linked to Asn-126. Asn-243 carries an N-linked (GlcNAc...) asparagine glycan. The LRRCT domain maps to 311 to 362; sequence NLWECSPRVCALASWLGSFQGRWEHSILCHSPDHTQGEDILDAVHGFQLCWN. Asn-362 carries an N-linked (GlcNAc...) asparagine glycan. The chain crosses the membrane as a helical span at residues 422–442; it reads VITGTMALLFSFFFIIFIVFI. Residues 443-515 lie on the Cytoplasmic side of the membrane; sequence SRKCCPPTLR…QQLPYKECEV (73 aa). Positions 512–515 match the Involved in DLG4-binding motif; that stretch reads ECEV.

This sequence belongs to the LRRTM family. Interacts with DLG4. Interacts with neurexin NRXN1; interaction is mediated by heparan sulfate glycan modification on neurexin. As to expression, expressed in neuronal tissues.

The protein localises to the cell membrane. Its subcellular location is the postsynaptic cell membrane. In terms of biological role, involved in the development and maintenance of excitatory synapses in the vertebrate nervous system. Regulates surface expression of AMPA receptors and instructs the development of functional glutamate release sites. Acts as a ligand for the presynaptic receptors NRXN1-A and NRXN1-B. The sequence is that of Leucine-rich repeat transmembrane neuronal protein 2 (Lrrtm2) from Mus musculus (Mouse).